Here is a 314-residue protein sequence, read N- to C-terminus: MAGNSQRRGAVRKAGTKKGPTVGSGGVRRRGLEGKGATPPAHQRPHHPAGKRAAKAARQAQGRHKKTDDTEIVLGRNPVLECLRAGVPATALYVALGADSDERLTESVQIAADKGIAILEVPRHDLDRIAANGMHQGIALQVPPYNYAHPDDLLAEAKSDAMPALLVALDNISDPRNLGAIVRSVAAFGGHGVLIPQRRSASVTAVAWRTSAGAAARTPVARATNLTRALKQWADAGLQVVGLDADGDTTVDQIDGAGPIVVVVGSEGKGLSRLVRENCDAVVSIPMAGPTESLNASVAAGVVLAEIARQRRSA.

Residues 1-70 (MAGNSQRRGA…QGRHKKTDDT (70 aa)) are disordered. Residues 43–65 (QRPHHPAGKRAAKAARQAQGRHK) are compositionally biased toward basic residues. S-adenosyl-L-methionine-binding residues include G265, I285, and L294.

This sequence belongs to the class IV-like SAM-binding methyltransferase superfamily. RNA methyltransferase TrmH family.

This is an uncharacterized protein from Mycolicibacterium vanbaalenii (strain DSM 7251 / JCM 13017 / BCRC 16820 / KCTC 9966 / NRRL B-24157 / PYR-1) (Mycobacterium vanbaalenii).